We begin with the raw amino-acid sequence, 247 residues long: Aspartate/glutamate leucyltransferase (247 aa).

This sequence belongs to the R-transferase family. Bpt subfamily.

The protein resides in the cytoplasm. It catalyses the reaction N-terminal L-glutamyl-[protein] + L-leucyl-tRNA(Leu) = N-terminal L-leucyl-L-glutamyl-[protein] + tRNA(Leu) + H(+). It carries out the reaction N-terminal L-aspartyl-[protein] + L-leucyl-tRNA(Leu) = N-terminal L-leucyl-L-aspartyl-[protein] + tRNA(Leu) + H(+). Functionally, functions in the N-end rule pathway of protein degradation where it conjugates Leu from its aminoacyl-tRNA to the N-termini of proteins containing an N-terminal aspartate or glutamate. This chain is Aspartate/glutamate leucyltransferase, found in Chromohalobacter salexigens (strain ATCC BAA-138 / DSM 3043 / CIP 106854 / NCIMB 13768 / 1H11).